A 645-amino-acid chain; its full sequence is Iron-regulated surface determinant protein B (645 aa).

An N-terminal signal peptide occupies residues 1-40 (MNKQQKEFKSFYSIRKSSLGVASVAISTLLLLMSNGEAQA). A YSIRK-G/S signaling motif motif is present at residues 12 to 23 (YSIRKSSLGVAS). Over residues 38–53 (AQAAAEETGGTNTEAQ) the composition is skewed to low complexity. The disordered stretch occupies residues 38–113 (AQAAAEETGG…APKETKEVKP (76 aa)). A compositionally biased stretch (basic and acidic residues) spans 84–113 (KEVEAPTSETKEAKEVKEVKAPKETKEVKP). NEAT domains lie at 144–269 (SAPN…KFKT) and 341–458 (KMTD…TKAN). 2 residues coordinate heme: Met362 and Tyr440. 2 stretches are compositionally biased toward basic and acidic residues: residues 458 to 476 (NTDK…KKEA) and 489 to 534 (VEKE…KGEV). The tract at residues 458–619 (NTDKSNKKEQ…LPQTGEESNK (162 aa)) is disordered. Low complexity predominate over residues 535–560 (ESSSTTPTKVVSTTQNVAKPTTASSK). Over residues 585 to 615 (NIKNTNDGHTQSQNNKNTQENKAKSLPQTGE) the composition is skewed to polar residues. The LPXTG sorting signal motif lies at 610 to 614 (LPQTG). Thr613 carries the pentaglycyl murein peptidoglycan amidated threonine modification. The propeptide at 614 to 645 (GEESNKDMTLPLMALLALSSIVAFVLPRKRKN) is removed by sortase.

It belongs to the IsdB family. As to quaternary structure, interacts with host HBA; this interaction allows heme extraction as iron source. Interacts with IsdA.

The protein localises to the secreted. It localises to the cell wall. Its function is as follows. Cell wall-anchored surface receptor that extracts heme from oxidized metHb to enable growth on hemoglobin as a sole iron source. Rapidly extracts heme from hemoglobin and transfers it to IsdA or IsdC, which then relays it to the membrane transporter/IsdEF for internalization. Also promotes resistance to hydrogen peroxide and killing by neutrophils. In Staphylococcus aureus (strain USA300 / TCH1516), this protein is Iron-regulated surface determinant protein B (isdB).